The following is an 814-amino-acid chain: Leucine-rich repeat-containing protein 41 (814 aa).

Residues 45-54 (ALFELCGRAV) form an interaction with Elongin BC complex region. S155, S276, and S326 each carry phosphoserine. A disordered region spans residues 265-408 (LCGEASRGRA…KKGARTRQGC (144 aa)). T327 carries the phosphothreonine modification. Over residues 354–385 (TKRPPSAPATTSSASASSSTSSSKRAPASSAP) the composition is skewed to low complexity. Phosphoserine is present on S375. Residues 389-403 (PLKRFKRAAGKKGAR) are compositionally biased toward basic residues. 7 LRR repeats span residues 489–509 (WVSL…IFRL), 520–532 (AGCR…LSDL), 533–557 (FSPL…VLSI), 615–637 (SGSL…FGLV), 638–661 (LQTL…LADC), 703–730 (NSTL…VFSE), and 733–754 (SSSL…LLEF).

In terms of assembly, part of a E3 ubiquitin ligase complex with elongin BC complex (ELOB and ELOC), RBX1 and CUL5.

This is Leucine-rich repeat-containing protein 41 (LRRC41) from Bos taurus (Bovine).